A 417-amino-acid polypeptide reads, in one-letter code: UDP-N-acetylglucosamine 1-carboxyvinyltransferase (417 aa).

Position 22–23 (22–23) interacts with phosphoenolpyruvate; the sequence is KN. R92 serves as a coordination point for UDP-N-acetyl-alpha-D-glucosamine. C116 acts as the Proton donor in catalysis. 2-(S-cysteinyl)pyruvic acid O-phosphothioketal is present on C116. Positions 304 and 326 each coordinate UDP-N-acetyl-alpha-D-glucosamine.

This sequence belongs to the EPSP synthase family. MurA subfamily.

Its subcellular location is the cytoplasm. The catalysed reaction is phosphoenolpyruvate + UDP-N-acetyl-alpha-D-glucosamine = UDP-N-acetyl-3-O-(1-carboxyvinyl)-alpha-D-glucosamine + phosphate. Its pathway is cell wall biogenesis; peptidoglycan biosynthesis. Cell wall formation. Adds enolpyruvyl to UDP-N-acetylglucosamine. This Geobacter metallireducens (strain ATCC 53774 / DSM 7210 / GS-15) protein is UDP-N-acetylglucosamine 1-carboxyvinyltransferase.